A 345-amino-acid polypeptide reads, in one-letter code: 3-dehydroquinate synthase (345 aa).

Residues 62 to 67 (DGEEYK), 96 to 100 (GVISD), 120 to 121 (TT), lysine 133, lysine 142, and 160 to 163 (FLKT) contribute to the NAD(+) site. 3 residues coordinate Zn(2+): glutamate 175, histidine 233, and histidine 250.

Belongs to the sugar phosphate cyclases superfamily. Dehydroquinate synthase family. It depends on Co(2+) as a cofactor. Zn(2+) is required as a cofactor. Requires NAD(+) as cofactor.

The protein resides in the cytoplasm. It carries out the reaction 7-phospho-2-dehydro-3-deoxy-D-arabino-heptonate = 3-dehydroquinate + phosphate. It participates in metabolic intermediate biosynthesis; chorismate biosynthesis; chorismate from D-erythrose 4-phosphate and phosphoenolpyruvate: step 2/7. In terms of biological role, catalyzes the conversion of 3-deoxy-D-arabino-heptulosonate 7-phosphate (DAHP) to dehydroquinate (DHQ). This is 3-dehydroquinate synthase from Campylobacter concisus (strain 13826).